Reading from the N-terminus, the 595-residue chain is UvrABC system protein C (595 aa).

Residues 14–91 (NNPGCYLHKD…IQENMPKFNI (78 aa)) enclose the GIY-YIG domain. The region spanning 196 to 231 (DKIVNQLKAKMKDMSDQMEFERAAEYRDLIEAVSTL) is the UVR domain.

The protein belongs to the UvrC family. In terms of assembly, interacts with UvrB in an incision complex.

It localises to the cytoplasm. Its function is as follows. The UvrABC repair system catalyzes the recognition and processing of DNA lesions. UvrC both incises the 5' and 3' sides of the lesion. The N-terminal half is responsible for the 3' incision and the C-terminal half is responsible for the 5' incision. The chain is UvrABC system protein C from Streptococcus thermophilus (strain ATCC BAA-250 / LMG 18311).